The following is a 536-amino-acid chain: MSDYENDDECWSALESFRVKLISVIDPSRITPYLRQCKVLNPDDEEQVLSDPNLVIRKRKVGVLLDILQRTGHKGYVAFLESLELYYPQLYRKVTGKEPARVFSMIIDASGESGLTQLLMTEVMKLQKKVQDLTALLSSKDDFIKELRVKDSLLRKHQERVQRLKEECELSSAELKRCKDENYDLAMRLAHLSEEKGAALMRNRDLQLEVDQLRHSLMKAEDDCKVERKHTLKLRHAMEQRPSQELLWDLQQERDLLQARVQELEVSVQEGKLHRNSPYIQVLEEDWRQALQEHQEQASTIFSLRKDLRQAEALRTRCMEEKEMFELQCLALRKDAKMYKDRIEAILQQMEEVSIERDQAMTSREELHAQCAQSFQDKDKLRKQVRELDEKADELQLQLFQTESRLLAAEGRLKQQQLDMLILSSDLEDSSPRNSQELSLPQDLEEDAQLSDKGVLADRESPEQPFVVLNKKHLSQTHDTVPSSSEPPEKERRRLKESFENYRRKRALRKMQNSWRQGEGDHGNTTGSDNTDTEGS.

Ser2 bears the Phosphoserine mark. Positions 3, 10, and 73 each coordinate Zn(2+). A CARD domain is found at 6-98 (NDDECWSALE…QLYRKVTGKE (93 aa)). The segment at 99 to 116 (PARVFSMIIDASGESGLT) is linker. Coiled-coil stretches lie at residues 117 to 277 (QLLM…HRNS) and 303 to 420 (SLRK…QLDM). A Glycyl lysine isopeptide (Lys-Gly) (interchain with G-Cter in ubiquitin) cross-link involves residue Lys125. Phosphothreonine is present on Thr231. Ser277 carries the phosphoserine modification. Ser424, Ser425, Ser431, Ser451, Ser461, Ser483, and Ser498 each carry phosphoserine. Residues 425 to 451 (SDLEDSSPRNSQELSLPQDLEEDAQLS) form a disordered region. A disordered region spans residues 472 to 536 (KHLSQTHDTV…GSDNTDTEGS (65 aa)). Residues 487–502 (PPEKERRRLKESFENY) show a composition bias toward basic and acidic residues. A phosphothreonine; by CK2 mark is found at Thr531 and Thr533.

As to quaternary structure, monomer. Homodimer; homodimerization is mediated by the CARD domain which forms an extensive interaction with the adjacent linker and coiled-coil regions; leads to an autoinhibited state. Homomultimer; polymerizes following activation, forming a nucleating helical template that seeds BCL10-filament formation via a CARD-CARD interaction. Interacts (via CARD domain) with BCL10 (via CARD domain); interaction takes place following CARD9 activation and polymerization, leading to the formation of a filamentous CBM complex assembly. Component of a CBM complex (CARD9-BCL10, MALT1), composed of CARD9, BCL10 and MALT1. Interacts with RASGRF1. Interacts with NOD2 (via NACHT domain); interaction is direct. Interacts with RIPK2. Interacts with VHL; without leading to protein degradation. Post-translationally, phosphorylated at Thr-231 by PRKCD downstream of C-type lectin receptors activation: phosphorylation promotes interaction with BCL10, followed by activation of NF-kappa-B and MAP kinase p38 pathways. Phosphorylated at Thr-531 and Thr-533 by CK2 following interaction with VHL, leading to inhibit the ability to activate NF-kappa-B. In terms of processing, ubiquitinated at Lys-125 via 'Lys-27'-linked ubiquitin by TRIM62 downstream of C-type lectin receptors activation; leading to CARD9 activation, followed by activation of NF-kappa-B and MAP kinase p38 pathways. Deubiquitinated at Lys-125 by USP15, inhibiting CARD9.

The protein localises to the cytoplasm. Maintained in an autoinhibited state via homodimerization in which the CARD domain forms an extensive interaction with the adjacent linker and coiled-coil regions. Activation downstream of C-type lectin receptors, by phosphorylation by PRKCD and/or ubiquitination by TRIM62, triggers disruption of the CARD domain-coiled coil interface, CARD9 homooligomerization and BCL10 recruitment, followed by activation of NF-kappa-B and MAP kinase p38 pathways. Zinc-binding inhibits activation by stabilizing the CARD ground-state conformation and restricting its capacity to form BCL10-nucleating filaments. Its function is as follows. Adapter protein that plays a key role in innate immune response against fungi by forming signaling complexes downstream of C-type lectin receptors. CARD9-mediated signals are essential for antifungal immunity against a subset of fungi from the phylum Ascomycota. Transduces signals in myeloid cells downstream of C-type lectin receptors CLEC7A (dectin-1), CLEC6A (dectin-2) and CLEC4E (Mincle), which detect pathogen-associated molecular pattern metabolites (PAMPs), such as fungal carbohydrates, and trigger CARD9 activation. Upon activation, CARD9 homooligomerizes to form a nucleating helical template that recruits BCL10 via CARD-CARD interaction, thereby promoting polymerization of BCL10 and subsequent recruitment of MALT1: this leads to activation of NF-kappa-B and MAP kinase p38 (MAPK11, MAPK12, MAPK13 and/or MAPK14) pathways which stimulate expression of genes encoding pro-inflammatory cytokines and chemokines. CARD9 signaling in antigen-presenting cells links innate sensing of fungi to the activation of adaptive immunity and provides a cytokine milieu that induces the development and subsequent of interleukin 17-producing T helper (Th17) cells. Also involved in activation of myeloid cells via classical ITAM-associated receptors and TLR: required for TLR-mediated activation of MAPK, while it is not required for TLR-induced activation of NF-kappa-B. CARD9 can also be engaged independently of BCL10: forms a complex with RASGRF1 downstream of C-type lectin receptors, which recruits and activates HRAS, leading to ERK activation and the production of cytokines. Acts as an important regulator of the intestinal commensal fungi (mycobiota) component of the gut microbiota. Plays an essential role in antifungal immunity against dissemination of gut fungi: acts by promoting induction of antifungal IgG antibodies response in CX3CR1(+) macrophages to confer protection against disseminated C.albicans or C.auris infection. Also mediates immunity against other pathogens, such as certain bacteria, viruses and parasites; CARD9 signaling is however redundant with other innate immune responses. In response to L.monocytogenes infection, required for the production of inflammatory cytokines activated by intracellular peptidoglycan: acts by connecting NOD2 recognition of peptidoglycan to downstream activation of MAP kinases (MAPK) without activating NF-kappa-B. The protein is Caspase recruitment domain-containing protein 9 of Rattus norvegicus (Rat).